We begin with the raw amino-acid sequence, 162 residues long: Calcium-binding protein 4b (162 aa).

EF-hand domains are found at residues 10-45, 46-81, 85-120, and 123-158; these read ELTN…CKYP, NPTL…DYII, TCLK…SGSN, and QAKV…YFEI. 10 residues coordinate Ca(2+): Asp23, Asn25, Asp27, Gln29, Glu34, Asp59, Asp61, Asp63, Lys65, and Glu70. Residues Asp136, Asp138, Asp140, Cys142, and Glu147 each coordinate Ca(2+).

The chain is Calcium-binding protein 4b (cbpD2) from Dictyostelium discoideum (Social amoeba).